The primary structure comprises 505 residues: Argininosuccinate lyase (505 aa).

This sequence belongs to the lyase 1 family. Argininosuccinate lyase subfamily.

The protein localises to the cytoplasm. The catalysed reaction is 2-(N(omega)-L-arginino)succinate = fumarate + L-arginine. The protein operates within amino-acid biosynthesis; L-arginine biosynthesis; L-arginine from L-ornithine and carbamoyl phosphate: step 3/3. The sequence is that of Argininosuccinate lyase from Rhodococcoides fascians (Rhodococcus fascians).